We begin with the raw amino-acid sequence, 101 residues long: Integration host factor subunit alpha (101 aa).

Belongs to the bacterial histone-like protein family. As to quaternary structure, heterodimer of an alpha and a beta chain.

This protein is one of the two subunits of integration host factor, a specific DNA-binding protein that functions in genetic recombination as well as in transcriptional and translational control. This chain is Integration host factor subunit alpha, found in Dinoroseobacter shibae (strain DSM 16493 / NCIMB 14021 / DFL 12).